The primary structure comprises 764 residues: MTSPSSSPVFRLETLDGGQEDGSEADRGKLDFGSGLPPMESQFQGEDRKFAPQIRVNLNYRKGTGASQPDPNRFDRDRLFNAVSRGVPEDLAGLPEYLSKTSKYLTDSEYTEGSTGKTCLMKAVLNLKDGVNACILPLLQIDRDSGNPQPLVNAQCTDDYYRGHSALHIAIEKRSLQCVKLLVENGANVHARACGRFFQKGQGTCFYFGELPLSLAACTKQWDVVSYLLENPHQPASLQATDSQGNTVLHALVMISDNSAENIALVTSMYDGLLQAGARLCPTVQLEDIRNLQDLTPLKLAAKEGKIEIFRHILQREFSGLSHLSRKFTEWCYGPVRVSLYDLASVDSCEENSVLEIIAFHCKSPHRHRMVVLEPLNKLLQAKWDLLIPKFFLNFLCNLIYMFIFTAVAYHQPTLKKQAAPHLKAEVGNSMLLTGHILILLGGIYLLVGQLWYFWRRHVFIWISFIDSYFEILFLFQALLTVVSQVLCFLAIEWYLPLLVSALVLGWLNLLYYTRGFQHTGIYSVMIQKVILRDLLRFLLIYLVFLFGFAVALVSLSQEAWRPEAPTGPNATESVQPMEGQEDEGNGAQYRGILEASLELFKFTIGMGELAFQEQLHFRGMVLLLLLAYVLLTYILLLNMLIALMSETVNSVATDSWSIWKLQKAISVLEMENGYWWCRKKQRAGVMLTVGTKPDGSPDERWCFRVEEVNWASWEQTLPTLCEDPSGAGVPRTLENPVLASPPKEDEDGASEENYVPVQLLQSN.

A disordered region spans residues 1–46 (MTSPSSSPVFRLETLDGGQEDGSEADRGKLDFGSGLPPMESQFQGE). A required for interaction with SLC50A1 region spans residues 1–388 (MTSPSSSPVF…LLQAKWDLLI (388 aa)). The Cytoplasmic segment spans residues 1–390 (MTSPSSSPVF…QAKWDLLIPK (390 aa)). At Ser6 the chain carries Phosphoserine. ANK repeat units follow at residues 72-114 (NRFD…TEGS), 115-161 (TGKT…DDYY), 162-207 (RGHS…TCFY), 208-243 (FGELPLSLAACTKQWDVVSYLLENPHQPASLQATDS), 244-292 (QGNT…IRNL), and 293-319 (QDLTPLKLAAKEGKIEIFRHILQREFS). Residues 391–411 (FFLNFLCNLIYMFIFTAVAYH) traverse the membrane as a helical segment. Topologically, residues 412-434 (QPTLKKQAAPHLKAEVGNSMLLT) are extracellular. A helical transmembrane segment spans residues 435–455 (GHILILLGGIYLLVGQLWYFW). Residues 456–471 (RRHVFIWISFIDSYFE) lie on the Cytoplasmic side of the membrane. Residues 472 to 492 (ILFLFQALLTVVSQVLCFLAI) traverse the membrane as a helical segment. Glu493 is a topological domain (extracellular). Residues 494–514 (WYLPLLVSALVLGWLNLLYYT) traverse the membrane as a helical segment. At 515-537 (RGFQHTGIYSVMIQKVILRDLLR) the chain is on the cytoplasmic side. The helical transmembrane segment at 538-558 (FLLIYLVFLFGFAVALVSLSQ) threads the bilayer. The segment at 562–585 (RPEAPTGPNATESVQPMEGQEDEG) is disordered. Asn570 carries N-linked (GlcNAc...) asparagine glycosylation. Positions 572–609 (TESVQPMEGQEDEGNGAQYRGILEASLELFKFTIGMGE) form an intramembrane region, pore-forming. Residues 622-642 (VLLLLLAYVLLTYILLLNMLI) traverse the membrane as a helical segment. The Cytoplasmic portion of the chain corresponds to 643 to 764 (ALMSETVNSV…YVPVQLLQSN (122 aa)). The disordered stretch occupies residues 725 to 756 (PSGAGVPRTLENPVLASPPKEDEDGASEENYV). Phosphoserine occurs at positions 751 and 763.

The protein belongs to the transient receptor (TC 1.A.4) family. TrpV subfamily. TRPV2 sub-subfamily. Homotetramer. Interacts with a cAMP-dependent protein kinase type II regulatory subunit (PRKAR2A or PRKAR2B) and ACBD3. Interacts with SLC50A1; the interaction probably occurs intracellularly and depends on TRPV2 N-glycosylation. In terms of processing, N-glycosylated. Post-translationally, phosphorylated by PKA.

It localises to the cell membrane. The protein localises to the cytoplasm. The protein resides in the melanosome. It carries out the reaction Ca(2+)(in) = Ca(2+)(out). It catalyses the reaction Mg(2+)(in) = Mg(2+)(out). The catalysed reaction is Na(+)(in) = Na(+)(out). The enzyme catalyses K(+)(in) = K(+)(out). Its function is as follows. Calcium-permeable, non-selective cation channel with an outward rectification. Seems to be regulated, at least in part, by IGF1, PDGF and neuropeptide head activator. May transduce physical stimuli in mast cells. Activated by temperatures higher than 52 degrees Celsius; is not activated by vanilloids and acidic pH. The chain is Transient receptor potential cation channel subfamily V member 2 (TRPV2) from Homo sapiens (Human).